We begin with the raw amino-acid sequence, 219 residues long: Peptide methionine sulfoxide reductase MsrA (219 aa).

Cysteine 58 is a catalytic residue.

This sequence belongs to the MsrA Met sulfoxide reductase family.

It carries out the reaction L-methionyl-[protein] + [thioredoxin]-disulfide + H2O = L-methionyl-(S)-S-oxide-[protein] + [thioredoxin]-dithiol. It catalyses the reaction [thioredoxin]-disulfide + L-methionine + H2O = L-methionine (S)-S-oxide + [thioredoxin]-dithiol. Has an important function as a repair enzyme for proteins that have been inactivated by oxidation. Catalyzes the reversible oxidation-reduction of methionine sulfoxide in proteins to methionine. This is Peptide methionine sulfoxide reductase MsrA from Ectopseudomonas mendocina (strain ymp) (Pseudomonas mendocina).